A 154-amino-acid polypeptide reads, in one-letter code: D-aminoacyl-tRNA deacylase (154 aa).

The Gly-cisPro motif, important for rejection of L-amino acids signature appears at 137 to 138; that stretch reads GP.

Belongs to the DTD family. In terms of assembly, homodimer.

Its subcellular location is the cytoplasm. It catalyses the reaction glycyl-tRNA(Ala) + H2O = tRNA(Ala) + glycine + H(+). The catalysed reaction is a D-aminoacyl-tRNA + H2O = a tRNA + a D-alpha-amino acid + H(+). Its function is as follows. An aminoacyl-tRNA editing enzyme that deacylates mischarged D-aminoacyl-tRNAs. Also deacylates mischarged glycyl-tRNA(Ala), protecting cells against glycine mischarging by AlaRS. Acts via tRNA-based rather than protein-based catalysis; rejects L-amino acids rather than detecting D-amino acids in the active site. By recycling D-aminoacyl-tRNA to D-amino acids and free tRNA molecules, this enzyme counteracts the toxicity associated with the formation of D-aminoacyl-tRNA entities in vivo and helps enforce protein L-homochirality. The polypeptide is D-aminoacyl-tRNA deacylase (Thermomicrobium roseum (strain ATCC 27502 / DSM 5159 / P-2)).